The chain runs to 77 residues: Teretoxin Tsu15.4 (77 aa).

Positions 1–21 (MTKLTVLLLAILVLLPLATSN) are cleaved as a signal peptide. Positions 22-40 (SAADEALASLSGLLRRAKR) are excised as a propeptide.

Contains 4 disulfide bonds. In terms of tissue distribution, expressed by the venom duct.

Its subcellular location is the secreted. This chain is Teretoxin Tsu15.4, found in Terebra subulata (Chocolate spotted auger).